Here is a 130-residue protein sequence, read N- to C-terminus: Small ribosomal subunit protein uS11 (130 aa).

It belongs to the universal ribosomal protein uS11 family. Part of the 30S ribosomal subunit. Interacts with proteins S7 and S18. Binds to IF-3.

Located on the platform of the 30S subunit, it bridges several disparate RNA helices of the 16S rRNA. Forms part of the Shine-Dalgarno cleft in the 70S ribosome. This Shewanella amazonensis (strain ATCC BAA-1098 / SB2B) protein is Small ribosomal subunit protein uS11.